We begin with the raw amino-acid sequence, 269 residues long: UPF0162 protein bbp_163 (269 aa).

It belongs to the UPF0162 family.

This is UPF0162 protein bbp_163 from Buchnera aphidicola subsp. Baizongia pistaciae (strain Bp).